The following is a 302-amino-acid chain: N-acetylaspartate synthetase (302 aa).

The segment covering proline 46–valine 60 has biased composition (pro residues). Residues proline 46–proline 72 are disordered. The chain crosses the membrane as a helical span at residues tyrosine 121 to valine 141. One can recognise an N-acetyltransferase domain in the interval alanine 143–alanine 283.

It belongs to the NAT8 family. As to expression, expressed in brain.

The protein resides in the cytoplasm. The protein localises to the microsome membrane. It localises to the mitochondrion membrane. Its subcellular location is the endoplasmic reticulum membrane. The enzyme catalyses L-aspartate + acetyl-CoA = N-acetyl-L-aspartate + CoA + H(+). With respect to regulation, aminooxyacetic acid (AOAA) blocks its activity in both cytoplasm and mitochondria. Functionally, catalyzes the synthesis of N-acetylaspartate acid (NAA) from L-aspartate and acetyl-CoA. Promotes dopamine uptake by regulating TNF-alpha expression. Attenuates methamphetamine-induced inhibition of dopamine uptake. The chain is N-acetylaspartate synthetase from Homo sapiens (Human).